The sequence spans 2448 residues: Cysteine repeat modular protein 1 (2448 aa).

A helical membrane pass occupies residues 9-29; that stretch reads TSTNLLNIFALYFSAICFIYC. Asn-48, Asn-89, Asn-248, Asn-284, Asn-461, Asn-503, Asn-542, Asn-598, and Asn-619 each carry an N-linked (GlcNAc...) asparagine glycan. 4 FU repeats span residues 431-481, 485-530, 535-566, and 567-611; these read KNTC…GYYF, FMQC…GFYI, NFKCEKCNASCLSCTGPSFDQCLSCKSGFYLS, and SNTC…GQFA. FU repeat units follow at residues 645–694, 698–727, 728–772, 775–813, 819–868, 904–947, 950–983, 984–1027, 1063–1109, and 1113–1144; these read NNQC…GYFP, TSVCQACQGKCKTCTSSNTCSSCINGYYLQ, DSNC…GTFG, QNICQTCIDGCQTCYGPTLLECYSCEQGFFFQAFQITNN, KGMC…YYLS, GRVC…GFPD, QNVCVACHPTCVTCQGPLATDCLTCISGYYLNPA, NNIC…RTYP, QGAC…NQYV, and QNRCLPCFYSCSSCFGPNSNQCFSCQPNGFYL. N-linked (GlcNAc...) asparagine glycosylation is found at Asn-761 and Asn-812. A glycan (N-linked (GlcNAc...) asparagine) is linked at Asn-934. N-linked (GlcNAc...) asparagine glycosylation occurs at Asn-1002. Residue Asn-1146 is glycosylated (N-linked (GlcNAc...) asparagine). The FU 15 repeat unit spans residues 1147 to 1193; it reads QTQCSICDISCLQCSGPGFDSCIQCAQGYYKLGDSVCVQSCPDGFFL. The N-linked (GlcNAc...) asparagine glycan is linked to Asn-1194. FU repeat units follow at residues 1197-1232, 1234-1279, 1281-1332, 1346-1394, and 1402-1436; these read NNQCQSCNQVCFNCNGPQNSDCTSCAAGYYQSISNQ, GIIC…GYRS, KGVC…GTFQ, SYYC…GFIL, and NQYCKVCKINCVSCIQQFFYYQENCYSSCPVGTVQ. 3 N-linked (GlcNAc...) asparagine glycosylation sites follow: Asn-1296, Asn-1328, and Asn-1365. Residues Asn-1506, Asn-1601, Asn-1628, and Asn-1670 are each glycosylated (N-linked (GlcNAc...) asparagine). The region spanning 1739–1773 is the EGF-like domain; the sequence is SDISCSLNLCMNSGKCVPNSIFCSCPSAFTGPKCQ. 3 cysteine pairs are disulfide-bonded: Cys-1743–Cys-1754, Cys-1748–Cys-1761, and Cys-1763–Cys-1772. 7 N-linked (GlcNAc...) asparagine glycosylation sites follow: Asn-1800, Asn-1849, Asn-1877, Asn-1942, Asn-2117, Asn-2155, and Asn-2179. The next 2 helical transmembrane spans lie at 2201 to 2221 and 2238 to 2258; these read LYIMIIISLGIGAAFLGYSAI and IYFLYYFPIISFLVGPTNQFV. Asn-2260 is a glycosylation site (N-linked (GlcNAc...) asparagine). 4 consecutive transmembrane segments (helical) span residues 2267–2287, 2296–2316, 2352–2372, and 2386–2406; these read SLTIIASHFAFSSIYVQILPF, ILTSIITVSSTSVCIYWTIGV, MIGLVLAVLALISISVFIGLC, and AVFLIDLIADAIVVFILIIVG.

Its subcellular location is the membrane. In terms of biological role, required for mucocyst secretion. The chain is Cysteine repeat modular protein 1 from Tetrahymena thermophila (strain SB210).